Reading from the N-terminus, the 452-residue chain is Trigger factor (452 aa).

The PPIase FKBP-type domain occupies 171–256 (GDRVKVNFKG…ATAIETPEEK (86 aa)).

This sequence belongs to the FKBP-type PPIase family. Tig subfamily.

The protein localises to the cytoplasm. It catalyses the reaction [protein]-peptidylproline (omega=180) = [protein]-peptidylproline (omega=0). Its function is as follows. Involved in protein export. Acts as a chaperone by maintaining the newly synthesized protein in an open conformation. Functions as a peptidyl-prolyl cis-trans isomerase. This is Trigger factor from Bradyrhizobium sp. (strain BTAi1 / ATCC BAA-1182).